The sequence spans 434 residues: UDP-N-acetylglucosamine 1-carboxyvinyltransferase 1 (434 aa).

A phosphoenolpyruvate-binding site is contributed by 22-23; sequence KN. R93 provides a ligand contact to UDP-N-acetyl-alpha-D-glucosamine. C117 functions as the Proton donor in the catalytic mechanism. The residue at position 117 (C117) is a 2-(S-cysteinyl)pyruvic acid O-phosphothioketal. Residues 122–126, D306, and V328 each bind UDP-N-acetyl-alpha-D-glucosamine; that span reads RPIDQ.

This sequence belongs to the EPSP synthase family. MurA subfamily.

Its subcellular location is the cytoplasm. The catalysed reaction is phosphoenolpyruvate + UDP-N-acetyl-alpha-D-glucosamine = UDP-N-acetyl-3-O-(1-carboxyvinyl)-alpha-D-glucosamine + phosphate. It functions in the pathway cell wall biogenesis; peptidoglycan biosynthesis. In terms of biological role, cell wall formation. Adds enolpyruvyl to UDP-N-acetylglucosamine. This Bacillus cereus (strain ATCC 14579 / DSM 31 / CCUG 7414 / JCM 2152 / NBRC 15305 / NCIMB 9373 / NCTC 2599 / NRRL B-3711) protein is UDP-N-acetylglucosamine 1-carboxyvinyltransferase 1.